A 180-amino-acid chain; its full sequence is MSTTESQSYTADIPSERVVKTTDTIHVELTPHDLDSLAATRFVRSPSAGATVLFIGTTRDSFNNEPVSSLAYTSYTPLAISTLFKIATSILAKHSCTKIAIIHKLGECPIGEESIVIAVSAPHRQAAWRAGEETLEETKDRAEIWKLERFKGGEGVWRANRDGQKGVKVEGGKEGVEAKH.

Substrate contacts are provided by residues 123–124 (HR), Lys139, and 146–148 (KLE). A disordered region spans residues 161-180 (RDGQKGVKVEGGKEGVEAKH).

This sequence belongs to the MoaE family. MOCS2B subfamily. In terms of assembly, heterotetramer; composed of 2 small (MOCS2A) and 2 large (MOCS2B) subunits.

The protein resides in the cytoplasm. The catalysed reaction is 2 [molybdopterin-synthase sulfur-carrier protein]-C-terminal-Gly-aminoethanethioate + cyclic pyranopterin phosphate + H2O = molybdopterin + 2 [molybdopterin-synthase sulfur-carrier protein]-C-terminal Gly-Gly + 2 H(+). The protein operates within cofactor biosynthesis; molybdopterin biosynthesis. In terms of biological role, catalytic subunit of the molybdopterin synthase complex, a complex that catalyzes the conversion of precursor Z into molybdopterin. Acts by mediating the incorporation of 2 sulfur atoms from thiocarboxylated MOCS2A into precursor Z to generate a dithiolene group. This chain is Molybdopterin synthase catalytic subunit, found in Pyrenophora tritici-repentis (strain Pt-1C-BFP) (Wheat tan spot fungus).